The primary structure comprises 439 residues: Dolichyl-diphosphooligosaccharide--protein glycosyltransferase 48 kDa subunit (439 aa).

The N-terminal stretch at 1–26 (MATRAARVWSGWWLLLLPLLGLAGAS) is a signal peptide. Residues 27 to 409 (GPRTLVLLDN…QYERFIPSAY (383 aa)) lie on the Lumenal side of the membrane. A helical transmembrane segment spans residues 410 to 430 (PYYASAFSMMLGLFIFSVVFL). At 431–439 (HMKEKEKSD) the chain is on the cytoplasmic side.

It belongs to the DDOST 48 kDa subunit family. In terms of assembly, component of the oligosaccharyltransferase (OST) complex. OST exists in two different complex forms which contain common core subunits RPN1, RPN2, OST48, OST4, DAD1 and TMEM258, either STT3A or STT3B as catalytic subunits, and form-specific accessory subunits. STT3A complex assembly occurs through the formation of 3 subcomplexes. Subcomplex 1 contains RPN1 and TMEM258, subcomplex 2 contains the STT3A-specific subunits STT3A, DC2/OSTC, and KCP2 as well as the core subunit OST4, and subcomplex 3 contains RPN2, DAD1, and OST48. The STT3A complex can form stable complexes with the Sec61 complex or with both the Sec61 and TRAP complexes. Interacts with SMIM22.

Its subcellular location is the endoplasmic reticulum membrane. It participates in protein modification; protein glycosylation. Functionally, subunit of the oligosaccharyl transferase (OST) complex that catalyzes the initial transfer of a defined glycan (Glc(3)Man(9)GlcNAc(2) in eukaryotes) from the lipid carrier dolichol-pyrophosphate to an asparagine residue within an Asn-X-Ser/Thr consensus motif in nascent polypeptide chains, the first step in protein N-glycosylation. N-glycosylation occurs cotranslationally and the complex associates with the Sec61 complex at the channel-forming translocon complex that mediates protein translocation across the endoplasmic reticulum (ER). All subunits are required for a maximal enzyme activity. Required for the assembly of both SST3A- and SS3B-containing OST complexes. The polypeptide is Dolichyl-diphosphooligosaccharide--protein glycosyltransferase 48 kDa subunit (Bos taurus (Bovine)).